A 184-amino-acid polypeptide reads, in one-letter code: PXMP2/4 family protein 3 (184 aa).

Positions 1–44 (MSNSKPLSLTDAVTTWYMKKLKSKPIQTKALTSATLSFISSVVA) are cleaved as a signal peptide. Helical transmembrane passes span 58-78 (VVKF…WHII), 97-117 (IVDQ…VLAI), and 159-179 (LRVL…SILA).

The protein belongs to the peroxisomal membrane protein PXMP2/4 family.

Its subcellular location is the membrane. This Dictyostelium discoideum (Social amoeba) protein is PXMP2/4 family protein 3.